Here is a 170-residue protein sequence, read N- to C-terminus: UPF0690 protein C1orf52 homolog (170 aa).

Disordered regions lie at residues 1–56 and 124–170; these read MAAE…PDEL and SNVY…KRKV. The segment covering 46 to 56 has biased composition (basic and acidic residues); the sequence is DTKKLPGPDEL. The span at 144–159 shows a compositional bias: acidic residues; it reads EEEEAREDSPPSDDEQ.

This sequence belongs to the UPF0690 family.

This chain is UPF0690 protein C1orf52 homolog, found in Xenopus tropicalis (Western clawed frog).